The chain runs to 683 residues: Leucine-rich repeat protein soc-2 homolog (683 aa).

The span at 1 to 19 (MNLCSSGATASTTSLSSTG) shows a compositional bias: low complexity. 2 disordered regions span residues 1–54 (MNLC…SDVS) and 74–150 (GTDE…IQAD). Over residues 26 to 49 (GVPGGGAEGGGGGGGSGNSGGGGK) the composition is skewed to gly residues. The segment covering 74-86 (GTDELSNANSPAN) has biased composition (low complexity). The span at 99–117 (QQPTGSNGHSHLHNENNAN) shows a compositional bias: polar residues. LRR repeat units follow at residues 164 to 185 (GIKR…VKEC), 187 to 208 (HLTE…IGCL), 210 to 231 (SLRN…LQNC), 233 to 254 (QLKV…IYRL), 256 to 277 (SLTT…LRQL), 279 to 300 (NLTM…IGAL), 302 to 323 (NLTT…IGNC), 325 to 346 (NLSA…IGNL), 348 to 370 (SLVR…KNCK), 371 to 392 (SMDE…MLAS), 395 to 416 (GLTT…GPAQ), 419 to 440 (NVYS…IFSR), 443 to 464 (GLTK…IGTW), 466 to 487 (NMVE…IMNL), 489 to 510 (NLEI…IGNL), 512 to 533 (RLRI…IGLL), 535 to 556 (ELQR…IGHL), 558 to 579 (NLTH…IGSL), 581 to 603 (SLEN…LALC), and 605 to 626 (NLKY…IQAG). The span at 661–671 (AGGNGGGGAAA) shows a compositional bias: gly residues. Residues 661 to 683 (AGGNGGGGAAAAGGSASRSSDRR) are disordered. A compositionally biased stretch (low complexity) spans 672–683 (AGGSASRSSDRR).

Belongs to the SHOC2 family.

Its function is as follows. Acts as a Ras effector and participates in MAPK pathway activation. Probably acts as a regulatory subunit of protein phosphatase that specifically dephosphorylates Raf kinase and stimulate Raf activity at specialized signaling complexes upon Ras activation. The chain is Leucine-rich repeat protein soc-2 homolog (Sur-8) from Drosophila sechellia (Fruit fly).